Reading from the N-terminus, the 620-residue chain is Glutathione-regulated potassium-efflux system protein KefC (620 aa).

12 helical membrane-spanning segments follow: residues 4–24, 26–46, 54–74, 90–110, 114–134, 149–169, 178–198, 218–238, 270–290, 294–314, 327–347, and 359–379; these read HTLIQALIYLGSAALIVPIAV, LGLGSVLGYLIAGCIIGPWGL, SILHFAEIGVVLMLFIIGLEL, GALQMVICGGLLGLFCMLLGL, VAELIGMTLALSSTAIAMQAM, FAVLLFQDIAAIPLVAMIPLL, MGAFALSALKVAGALVLVVLL, VFSAVALFLVFGFGLLLEEVG, GLLLGLFFIGVGMSIDFGTLL, LRIVILLLGFLIIKIAMLWLI, WFAVLLGQGSEFAFVVFGAAQ, and SLTLAVALSMAATPILLVILN. One can recognise an RCK N-terminal domain in the interval 399–518; sequence QPRVIIAGFG…AGVEKPERET (120 aa). Positions 597 to 620 are disordered; that stretch reads GWQGTEEGKHTGNMADEPETKPSS.

The protein belongs to the monovalent cation:proton antiporter 2 (CPA2) transporter (TC 2.A.37) family. KefC subfamily. As to quaternary structure, homodimer. Interacts with the regulatory subunit KefF.

Its subcellular location is the cell inner membrane. Its function is as follows. Pore-forming subunit of a potassium efflux system that confers protection against electrophiles. Catalyzes K(+)/H(+) antiport. This is Glutathione-regulated potassium-efflux system protein KefC from Escherichia coli O6:K15:H31 (strain 536 / UPEC).